A 975-amino-acid chain; its full sequence is MQSADDKSLLARFFHADRSLTAVASELDSFDGRAEPDRCTRLVSRLRQNQDKVLAITNLIMEELLGEDRDPRAFRAKFPEEVLQENLAGQLWFGAECLAAGSSIMNRESESKEMRPLAQAVTKSLGNVRVLLRDQCLKNNVPNSKTLHLDLNDSTTEQLYESLKIFDRLFAEFELSYVSAMVQVKSRHEYEMQQWIGVLFSETLQRALKIGLLDQEMVDAFDPGLMFSIPRLAIVAGLVVYAKGPLNMDMPGDQLSEMFRPFRTILIKIRDLLRNLNNQELYQLEKLLCTNEDINTKVPLGSSSIEAPSPEHSSHPTTSSTQNNNNSSNNNHSSSSTNTTSTTITTAGTTNTHRTVERLVDQRNNNHNSNSNSSSNPTVEGATLRSPSMLSLSTTSTPTASPTPSPTPSHSIASTSSAATSSTNPPADWSDGDDEDEDDDDIDVDEEDPESSDDGTDEEQLLKDIVAADCASGYLIPNTNLGNLLQPQEVPLTDNFVASEDDEYGTAEQQGHQGLEEEEPSTSAAMLAATRTLQRLRLPSSDNEPLAEPTTIKASEEHMQQPSGRHHRHHQSHHHHHHHRHSHQHQHRQPHPHRTTRSGRKRCSLEAADPETIQPEREQNLASGDTSAASSLSDDVSLAMRNTTARLKFKSTENLLHRLFVCIAGVADQLQTNFASDLRQILRSVFLMNMSAAQEDIDIPEKTKESELFEFRASENDVIQESAGSNQSIYSAEEVNPELDNVFSAGGGNQATGQRHSAGASMQRNNTIDLASQPGEGSPSGATTTTSRSHVTRSRSLGDQEAASSATSSTAQLRQLEQQQQQQQLQIQLQRQRNNSVGSNTPSSASSTSSSSEQNSPVSARSGSRRRLQSNNETQMPSSATSTSATLSPPAWIPDGKAPRCMACQTPFTAFRRRHHCRNCGGVFCGVCSNASAPLPKYGLTKAVRVCRDCYVREVRSGMGVQGVQSVQSVQASAS.

2 disordered regions span residues 299 to 458 and 504 to 523; these read PLGS…GTDE and YGTA…PSTS. Low complexity-rich tracts occupy residues 302–352, 365–376, 383–400, and 408–429; these read SSSI…TTNT, NNHNSNSNSSSN, TLRS…TPTA, and PSHS…PADW. Acidic residues predominate over residues 430 to 458; it reads SDGDDEDEDDDDIDVDEEDPESSDDGTDE. Residues Ser540 and Ser541 each carry the phosphoserine modification. Disordered regions lie at residues 556-633 and 740-891; these read EEHM…SSLS and DNVF…SPPA. Positions 564–602 are enriched in basic residues; it reads GRHHRHHQSHHHHHHHRHSHQHQHRQPHPHRTTRSGRKR. Over residues 621-633 the composition is skewed to low complexity; it reads LASGDTSAASSLS. Residues 751–770 are compositionally biased toward polar residues; it reads ATGQRHSAGASMQRNNTIDL. The residue at position 796 (Ser796) is a Phosphoserine. Low complexity-rich tracts occupy residues 802 to 860 and 877 to 890; these read AASS…PVSA and PSSA…LSPP. The segment at 895–955 adopts an FYVE-type zinc-finger fold; the sequence is DGKAPRCMAC…VCRDCYVREV (61 aa). Positions 901, 904, 917, 920, 925, 928, 947, and 950 each coordinate Zn(2+).

Belongs to the lst-2 family.

Functionally, negative regulator of epidermal growth factor receptor (EGFR) signaling. The polypeptide is Lateral signaling target protein 2 homolog (Drosophila sechellia (Fruit fly)).